Reading from the N-terminus, the 176-residue chain is NAD(P)H-quinone oxidoreductase subunit J (176 aa).

Belongs to the complex I 30 kDa subunit family. NDH-1 can be composed of about 15 different subunits; different subcomplexes with different compositions have been identified which probably have different functions.

It is found in the cell inner membrane. It carries out the reaction a plastoquinone + NADH + (n+1) H(+)(in) = a plastoquinol + NAD(+) + n H(+)(out). The catalysed reaction is a plastoquinone + NADPH + (n+1) H(+)(in) = a plastoquinol + NADP(+) + n H(+)(out). Functionally, NDH-1 shuttles electrons from an unknown electron donor, via FMN and iron-sulfur (Fe-S) centers, to quinones in the respiratory and/or the photosynthetic chain. The immediate electron acceptor for the enzyme in this species is believed to be plastoquinone. Couples the redox reaction to proton translocation, and thus conserves the redox energy in a proton gradient. Cyanobacterial NDH-1 also plays a role in inorganic carbon-concentration. In Gloeobacter violaceus (strain ATCC 29082 / PCC 7421), this protein is NAD(P)H-quinone oxidoreductase subunit J.